The sequence spans 127 residues: Fluoride-specific ion channel FluC (127 aa).

4 consecutive transmembrane segments (helical) span residues Phe4 to Val24, Tyr38 to Phe58, Val71 to Val91, and Leu104 to Leu124. The Na(+) site is built by Gly78 and Thr81.

It belongs to the fluoride channel Fluc/FEX (TC 1.A.43) family.

It is found in the cell inner membrane. It catalyses the reaction fluoride(in) = fluoride(out). Its activity is regulated as follows. Na(+) is not transported, but it plays an essential structural role and its presence is essential for fluoride channel function. Its function is as follows. Fluoride-specific ion channel. Important for reducing fluoride concentration in the cell, thus reducing its toxicity. The sequence is that of Fluoride-specific ion channel FluC from Vibrio parahaemolyticus serotype O3:K6 (strain RIMD 2210633).